The following is a 279-amino-acid chain: Acyl-[acyl-carrier-protein]--UDP-N-acetylglucosamine O-acyltransferase (279 aa).

The tract at residues Ile256–Ser279 is disordered.

This sequence belongs to the transferase hexapeptide repeat family. LpxA subfamily. As to quaternary structure, homotrimer.

It is found in the cytoplasm. It catalyses the reaction a (3R)-hydroxyacyl-[ACP] + UDP-N-acetyl-alpha-D-glucosamine = a UDP-3-O-[(3R)-3-hydroxyacyl]-N-acetyl-alpha-D-glucosamine + holo-[ACP]. Its pathway is glycolipid biosynthesis; lipid IV(A) biosynthesis; lipid IV(A) from (3R)-3-hydroxytetradecanoyl-[acyl-carrier-protein] and UDP-N-acetyl-alpha-D-glucosamine: step 1/6. Involved in the biosynthesis of lipid A, a phosphorylated glycolipid that anchors the lipopolysaccharide to the outer membrane of the cell. In Chlamydia caviae (strain ATCC VR-813 / DSM 19441 / 03DC25 / GPIC) (Chlamydophila caviae), this protein is Acyl-[acyl-carrier-protein]--UDP-N-acetylglucosamine O-acyltransferase.